The following is a 359-amino-acid chain: Opine dehydrogenase (359 aa).

This sequence belongs to the lysopine/nopaline/octopine/opine/vitopine dehydrogenases family. Homodimer.

The enzyme catalyses (2S)-2-[(R)-1-carboxyethylamino]pentanoate + NAD(+) + H2O = L-2-aminopentanoate + pyruvate + NADH + H(+). Its function is as follows. In the forward direction also acts on secondary amine dicarboxylates such as N-(1-carboxyethyl)methionine and N-(1-carboxyethyl)phenylalanine. In the reverse direction, the enzyme also acts on neutral amino acids as an amino donor. They include L-amino acids such as 2-aminopentanoic acid, 2-aminobutyric acid, 2-aminohexanoic acid, 3-chloroalanine, O-acetylserine, methionine, isoleucine, valine, phenylalanine, leucine and alanine. The sequence is that of Opine dehydrogenase (odh) from Arthrobacter sp. (strain 1C).